Consider the following 337-residue polypeptide: 15-cis-phytoene synthase (337 aa).

It belongs to the phytoene/squalene synthase family. Requires ATP as cofactor. The cofactor is Mn(2+). Mg(2+) is required as a cofactor.

The enzyme catalyses 2 (2E,6E,10E)-geranylgeranyl diphosphate = 15-cis-phytoene + 2 diphosphate. It participates in carotenoid biosynthesis; phytoene biosynthesis. Functionally, involved in the biosynthesis of carotenoids. Catalyzes the condensation of two molecules of geranylgeranyl diphosphate (GGPP) to give prephytoene diphosphate (PPPP) and the subsequent rearrangement of the cyclopropylcarbinyl intermediate to yield 15-cis-phytoene. This is 15-cis-phytoene synthase (crtB) from Synechocystis sp. (strain ATCC 27184 / PCC 6803 / Kazusa).